A 603-amino-acid polypeptide reads, in one-letter code: Conglutin beta 2 (603 aa).

An N-terminal signal peptide occupies residues M1–G30. Residues K36–E105 show a composition bias toward basic and acidic residues. Disordered regions lie at residues K36 to Y177, D343 to V363, and L375 to D399. Positions Q137–S147 are enriched in low complexity. The segment covering G148–R172 has biased composition (basic and acidic residues). The Cupin type-1 1 domain maps to Y177–Q335. A compositionally biased stretch (low complexity) spans S381–P393. One can recognise a Cupin type-1 2 domain in the interval F394 to E554. N504 is a glycosylation site (N-linked (GlcNAc...) asparagine). The span at Y564–Q574 shows a compositional bias: low complexity. The tract at residues Y564–G583 is disordered.

The protein belongs to the 7S seed storage protein family. As to quaternary structure, component of globulins complexes which accumulate in seeds.

Functionally, seed storage protein. Accumulates during seed development and is hydrolyzed after germination to provide a carbon and nitrogen source for the developing seedling. The sequence is that of Conglutin beta 2 from Lupinus angustifolius (Narrow-leaved blue lupine).